The following is a 711-amino-acid chain: F-box only protein 34 (711 aa).

4 disordered regions span residues 1–36 (MHLK…VNDE), 249–271 (SESY…EVGE), 337–372 (DTQV…ASQD), and 494–529 (YSQL…GSAE). Over residues 10–23 (QKKEHPPEVSRETQ) the composition is skewed to basic and acidic residues. Residues 354 to 364 (RADRCSPKEDQ) are compositionally biased toward basic and acidic residues. Positions 572–624 (QQYMAFLPHHIMVKIFRLLPTKSLVALKCTCCYFKFIIEYYNIRPADSRWVRD) constitute an F-box domain.

In terms of assembly, directly interacts with SKP1 and CUL1.

Substrate-recognition component of the SCF (SKP1-CUL1-F-box protein)-type E3 ubiquitin ligase complex. The chain is F-box only protein 34 (FBXO34) from Homo sapiens (Human).